The sequence spans 1425 residues: Ferlin 1 (1425 aa).

C2 domains follow at residues 1-123 (MAAK…RQWV), 161-281 (VNEG…PRWF), and 506-629 (TKAG…PVWL). The disordered stretch occupies residues 871-952 (RPQASRLSRE…ALAASPEEET (82 aa)). 2 stretches are compositionally biased toward basic and acidic residues: residues 877 to 889 (LSRE…ERGK) and 912 to 926 (ETEK…KKEG). C2 domains follow at residues 1032–1160 (EMDA…EQMV) and 1192–1319 (RADY…QQHY). The helical transmembrane segment at 1404-1424 (TGVWMTVAGIIALVIFVMFLL) threads the bilayer.

This sequence belongs to the ferlin family.

It localises to the golgi apparatus. Its subcellular location is the trans-Golgi network membrane. The protein localises to the endosome membrane. It is found in the cytoplasm. Its function is as follows. Plays a role in microneme replenishment, probably at the vesicular trafficking level. Directs microneme organelle traffic differentially based on microneme population. Regulates microneme secretion: facilitates microneme membrane fusion with the plasma membrane. In Toxoplasma gondii, this protein is Ferlin 1.